A 266-amino-acid polypeptide reads, in one-letter code: 3-methyl-2-oxobutanoate hydroxymethyltransferase (266 aa).

Mg(2+)-binding residues include Asp45 and Asp84. 3-methyl-2-oxobutanoate is bound by residues 45 to 46, Asp84, and Lys112; that span reads DS. Residue Glu114 participates in Mg(2+) binding. Catalysis depends on Glu181, which acts as the Proton acceptor.

It belongs to the PanB family. Homodecamer; pentamer of dimers. The cofactor is Mg(2+).

The protein localises to the cytoplasm. The catalysed reaction is 3-methyl-2-oxobutanoate + (6R)-5,10-methylene-5,6,7,8-tetrahydrofolate + H2O = 2-dehydropantoate + (6S)-5,6,7,8-tetrahydrofolate. It functions in the pathway cofactor biosynthesis; (R)-pantothenate biosynthesis; (R)-pantoate from 3-methyl-2-oxobutanoate: step 1/2. Its function is as follows. Catalyzes the reversible reaction in which hydroxymethyl group from 5,10-methylenetetrahydrofolate is transferred onto alpha-ketoisovalerate to form ketopantoate. This chain is 3-methyl-2-oxobutanoate hydroxymethyltransferase, found in Pseudomonas savastanoi pv. phaseolicola (strain 1448A / Race 6) (Pseudomonas syringae pv. phaseolicola (strain 1448A / Race 6)).